We begin with the raw amino-acid sequence, 106 residues long: ATP-dependent Clp protease adapter protein ClpS (106 aa).

The disordered stretch occupies residues 1 to 20 (MKVDMSTSVKDDAQLEASRV).

The protein belongs to the ClpS family. As to quaternary structure, binds to the N-terminal domain of the chaperone ClpA.

Involved in the modulation of the specificity of the ClpAP-mediated ATP-dependent protein degradation. This Chromobacterium violaceum (strain ATCC 12472 / DSM 30191 / JCM 1249 / CCUG 213 / NBRC 12614 / NCIMB 9131 / NCTC 9757 / MK) protein is ATP-dependent Clp protease adapter protein ClpS.